A 535-amino-acid chain; its full sequence is Formate--tetrahydrofolate ligase (535 aa).

50-57 (TPAGEGKT) serves as a coordination point for ATP.

This sequence belongs to the formate--tetrahydrofolate ligase family.

It catalyses the reaction (6S)-5,6,7,8-tetrahydrofolate + formate + ATP = (6R)-10-formyltetrahydrofolate + ADP + phosphate. It participates in one-carbon metabolism; tetrahydrofolate interconversion. The sequence is that of Formate--tetrahydrofolate ligase from Picrophilus torridus (strain ATCC 700027 / DSM 9790 / JCM 10055 / NBRC 100828 / KAW 2/3).